We begin with the raw amino-acid sequence, 554 residues long: Zinc finger protein syd-9 (554 aa).

3 consecutive C2H2-type zinc fingers follow at residues 20-43, 65-87, and 93-116; these read LTCP…QMFH, FICE…RSVH, and YVCK…LKHH. Disordered regions lie at residues 136–158, 298–319, and 342–383; these read KIVT…TATP, SPDT…PPMA, and ASGQ…CPSP. A compositionally biased stretch (low complexity) spans 142–158; the sequence is NGPTTNGSTPTTSTATP. Composition is skewed to polar residues over residues 351 to 360 and 370 to 379; these read PDSTDTQKGC and SDPSTSSGDS. A C2H2-type 4 zinc finger spans residues 387–410; the sequence is LHCKECGTLVRKSSHLPIHMTMSH. The tract at residues 516–554 is disordered; sequence RMEMSLSPIKPFQQRFSRERSSSSSVERSPSRERSRSPL. Residues 544–554 show a composition bias toward basic and acidic residues; that stretch reads SPSRERSRSPL.

As to expression, expressed mainly in body wall muscles and ventral cord motoneurons.

The protein localises to the nucleus. It is found in the nucleus speckle. Its function is as follows. Plays a role in regulating synaptic function, probably by modulation of endocytosis. May be dispensable in muscle for normal locomotion. May be involved in post-transcriptional mRNA processing, in parallel with unc-75. The chain is Zinc finger protein syd-9 from Caenorhabditis elegans.